Reading from the N-terminus, the 535-residue chain is Bifunctional purine biosynthesis protein PurH (535 aa).

Residues 6–151 form the MGS-like domain; that stretch reads TRLPIRRALI…KNHKDVAIVV (146 aa).

It belongs to the PurH family.

It carries out the reaction (6R)-10-formyltetrahydrofolate + 5-amino-1-(5-phospho-beta-D-ribosyl)imidazole-4-carboxamide = 5-formamido-1-(5-phospho-D-ribosyl)imidazole-4-carboxamide + (6S)-5,6,7,8-tetrahydrofolate. It catalyses the reaction IMP + H2O = 5-formamido-1-(5-phospho-D-ribosyl)imidazole-4-carboxamide. It functions in the pathway purine metabolism; IMP biosynthesis via de novo pathway; 5-formamido-1-(5-phospho-D-ribosyl)imidazole-4-carboxamide from 5-amino-1-(5-phospho-D-ribosyl)imidazole-4-carboxamide (10-formyl THF route): step 1/1. It participates in purine metabolism; IMP biosynthesis via de novo pathway; IMP from 5-formamido-1-(5-phospho-D-ribosyl)imidazole-4-carboxamide: step 1/1. The protein is Bifunctional purine biosynthesis protein PurH of Pseudomonas fluorescens (strain ATCC BAA-477 / NRRL B-23932 / Pf-5).